A 773-amino-acid chain; its full sequence is Carnitine O-palmitoyltransferase 1, liver isoform (773 aa).

Position 2 is an N-acetylalanine (Ala2). The Cytoplasmic segment spans residues 2–47 (AEAHQAVAFQFTVTPDGIDLRLSHEALRQIYLSGLHSWKKKFIRFK). The chain crosses the membrane as a helical span at residues 48–73 (NGIITGVYPASPSSWLIVVVGVMTTM). Residues 74–102 (YAKIDPSLGIIAKINRTLETANCMSSQTK) are Mitochondrial intermembrane-facing. A helical membrane pass occupies residues 103–122 (NVVSGVLFGTGLWVALIVTM). The Cytoplasmic segment spans residues 123 to 773 (RYSLKVLLSY…LFGLSSNSKK (651 aa)). Tyr282 is modified (3'-nitrotyrosine). Residue His473 is the Proton acceptor of the active site. 555-567 (GKGIIKKCRTSPD) provides a ligand contact to CoA. Thr588 is subject to Phosphothreonine. Tyr589 bears the 3'-nitrotyrosine mark. (R)-carnitine is bound by residues Tyr589 and Thr602. A Phosphothreonine modification is found at Thr604. Phosphoserine is present on residues Ser741 and Ser747.

This sequence belongs to the carnitine/choline acetyltransferase family. As to quaternary structure, homohexamer and homotrimer. Identified in a complex that contains at least CPT1A, ACSL1 and VDAC1. Also identified in complexes with ACSL1 and VDAC2 and VDAC3. Interacts with ZDHHC4. As to expression, strong expression in kidney and heart, and lower in liver and skeletal muscle.

It is found in the mitochondrion outer membrane. The catalysed reaction is (R)-carnitine + hexadecanoyl-CoA = O-hexadecanoyl-(R)-carnitine + CoA. It carries out the reaction succinyl-CoA + L-lysyl-[protein] = N(6)-succinyl-L-lysyl-[protein] + CoA + H(+). The protein operates within lipid metabolism; fatty acid beta-oxidation. Its activity is regulated as follows. Inhibited by malonyl-CoA. Catalyzes the transfer of the acyl group of long-chain fatty acid-CoA conjugates onto carnitine, an essential step for the mitochondrial uptake of long-chain fatty acids and their subsequent beta-oxidation in the mitochondrion. Also possesses a lysine succinyltransferase activity that can regulate enzymatic activity of substrate proteins such as ENO1 and metabolism independent of its classical carnitine O-palmitoyltransferase activity. Plays an important role in hepatic triglyceride metabolism. Also plays a role in inducible regulatory T-cell (iTreg) differentiation once activated by butyryl-CoA that antagonizes malonyl-CoA-mediated CPT1A repression. Sustains the IFN-I response by recruiting ZDHCC4 to palmitoylate MAVS at the mitochondria leading to MAVS stabilization and activation. Promotes ROS-induced oxidative stress in liver injury via modulation of NFE2L2 and NLRP3-mediated signaling pathways. The sequence is that of Carnitine O-palmitoyltransferase 1, liver isoform from Homo sapiens (Human).